Consider the following 251-residue polypeptide: Triosephosphate isomerase (251 aa).

9–11 (NWK) is a binding site for substrate. The active-site Electrophile is H95. E167 serves as the catalytic Proton acceptor. Substrate-binding positions include G173, S213, and 234 to 235 (GG). S213 bears the Phosphoserine mark.

The protein belongs to the triosephosphate isomerase family. In terms of assembly, homodimer.

The protein resides in the cytoplasm. The catalysed reaction is D-glyceraldehyde 3-phosphate = dihydroxyacetone phosphate. It participates in carbohydrate biosynthesis; gluconeogenesis. The protein operates within carbohydrate degradation; glycolysis; D-glyceraldehyde 3-phosphate from glycerone phosphate: step 1/1. Involved in the gluconeogenesis. Catalyzes stereospecifically the conversion of dihydroxyacetone phosphate (DHAP) to D-glyceraldehyde-3-phosphate (G3P). In Shouchella clausii (strain KSM-K16) (Alkalihalobacillus clausii), this protein is Triosephosphate isomerase.